Consider the following 611-residue polypeptide: Protein KINASE OF THE OUTER CHLOROPLAST MEMBRANE 1 (611 aa).

Topologically, residues 1–555 are cytoplasmic; sequence MASKIIAGKP…LEDFHWAVRP (555 aa). The Protein kinase domain maps to 39-306; the sequence is LKLRHRIGRG…TDILLVLKSL (268 aa). Residues 45–53 and Lys-74 contribute to the ATP site; that span reads IGRGPFGDV. Residues 556–572 traverse the membrane as a helical segment; that stretch reads LLIAMGLLTAMKLGICV. Residues 573-611 are Chloroplast intermembrane-facing; the sequence is RKKIGRSKDGKQRDGSTGQGDCKIPDGKGSDKSKWLVFF. The disordered stretch occupies residues 579-606; it reads SKDGKQRDGSTGQGDCKIPDGKGSDKSK. The segment covering 595–606 has biased composition (basic and acidic residues); it reads KIPDGKGSDKSK.

The protein belongs to the protein kinase superfamily. Ser/Thr protein kinase family. As to quaternary structure, associates with the TOC complex containing, at least, translocons at the chloroplast envelope (e.g. TOCs and TICs such as TOC159, TOC75, TOC33 and TIC56).

It is found in the plastid. It localises to the chloroplast outer membrane. It carries out the reaction L-seryl-[protein] + ATP = O-phospho-L-seryl-[protein] + ADP + H(+). The catalysed reaction is L-threonyl-[protein] + ATP = O-phospho-L-threonyl-[protein] + ADP + H(+). In terms of biological role, serine/threonine protein kinase acting as a regulatory component of the plastid protein import machinery by phosphorylating import receptors (e.g. the A-domain of TOC159, TOC120 and TOC132). Supports preprotein import and contributes to efficient chloroplast biogenesis, thus being required for survival during de-etiolation. In Arabidopsis thaliana (Mouse-ear cress), this protein is Protein KINASE OF THE OUTER CHLOROPLAST MEMBRANE 1.